The primary structure comprises 106 residues: Transcription initiation factor IIA subunit 2 (106 aa).

The protein belongs to the TFIIA subunit 2 family. In terms of assembly, TFIIA is a heterodimer of the large unprocessed subunit 1 and a small subunit gamma. It was originally believed to be a heterotrimer of an alpha (p30), a beta (p20) and a gamma (p14) subunit. Forms a complex with Moonshiner/CG12721 and Trf2. In terms of tissue distribution, ubiquitous.

Its subcellular location is the nucleus. Functionally, TFIIA is a component of the transcription machinery of RNA polymerase II and plays an important role in transcriptional activation. TFIIA in a complex with TBP mediates transcriptional activity. Part of a rhi-dependent transcription machinery that enables the generation of piRNA precursors from heterochromatin while maintaining the suppression of transposon-encoded promoters and enhancers. Forms a complex with Moonshiner/CG12721 and Trf2 which recruit transcriptional machinery to heterochromatin to initiate the bidirectional transcription of piRNA clusters, by interacting with the RDC (rhi, del and cuff) complex that binds to repressive H3K9me3 marks in the chromatin. This mechanism allows transcription to occur in piRNA clusters despite the lack of proper promoter elements and in the presence of the repressive H3K9me3 mark. In Drosophila melanogaster (Fruit fly), this protein is Transcription initiation factor IIA subunit 2 (TfIIA-S).